An 835-amino-acid chain; its full sequence is MSDNIPNDPFADRESQNYENPIPSREFILEFLEQAGVPMNRNDLFEALKLAGEEQYEGLRRRLRAMERDGQLVFTRRQCYALPEKLEMVKGYVIGHKDGHGWVRPEGSVGKDDDILLPHHQMKNIIHGDFVLVQPTDNSKRGRREGRLVRVLEERNSQIVGRFFLEYGYSYVVPDDSRISQDILIPNEHKAGARMGNVVVIEITDRGSRSRGMMGKVVEVLGENMAPGMETQIAIRTHQIPYEWPEAVEKQIVNLGEEVPEEAKVGRVDLRELPLVTIDGEDARDFDDAVFCEKKKDGGWRLWVAIADVSYYVRPDSALDKEAINRGNSVYFPSQVVPMLPEVLSNGLCSLNPQVDRLCMVCEMTISESGKLSSYKHYEAVMNSHARLTYSKVSAILEGDEELRERYQPLVSHLEELHAMYKVLKEARDQRGAIEFETVETKFIFNAERKIESIEPVIRNDAHKIIEECMILANIASASLVEKAKEPALYRIHESPGELRLQGFRDFLSELGLELKGGLEPSPTDYADLARQIAGRQDQELIQTMLLRSMKQAVYNADNAGHFGLALKRYAHFTSPIRRYPDLLLHRAIKYLIAKEEGRNQDRWTPTGGYHYSFDDMDFYGEQCSMTERRADDATREVADWLKCEYMQDHVGDELEGVIANVTSFGFFVRLTDLHIDGLVHISTLANDYYQFDPIGQRLIGESFGNIYRLGDAVKVKVLAVNLDDKQIDFELVETSRKLRGEGKTAKKRAAEAKRKAKEKKRAATRSSSKESATARAVPAIEPTKRPEQTDSGRKRKGPKRGDDDSAKKPKVKKAHKKKPHSKPKKTKRTKQDAQ.

One can recognise an RNB domain in the interval R267 to I593. The S1 motif domain maps to G652–V733. A compositionally biased stretch (basic and acidic residues) spans L739–K754. A disordered region spans residues L739–Q835. Basic residues predominate over residues R755 to A764. Over residues T765 to A777 the composition is skewed to low complexity. Basic and acidic residues predominate over residues P783–G793. Positions K809–R829 are enriched in basic residues.

It belongs to the RNR ribonuclease family. RNase R subfamily.

It is found in the cytoplasm. The catalysed reaction is Exonucleolytic cleavage in the 3'- to 5'-direction to yield nucleoside 5'-phosphates.. 3'-5' exoribonuclease that releases 5'-nucleoside monophosphates and is involved in maturation of structured RNAs. The protein is Ribonuclease R of Vibrio parahaemolyticus serotype O3:K6 (strain RIMD 2210633).